Consider the following 67-residue polypeptide: uncharacterized protein (67 aa).

This sequence belongs to the baculoviridae 8 kDa protein family.

This is an uncharacterized protein from Autographa californica nuclear polyhedrosis virus (AcMNPV).